We begin with the raw amino-acid sequence, 761 residues long: Xaa-Pro dipeptidyl-peptidase (761 aa).

Residues serine 347, aspartate 467, and histidine 497 each act as charge relay system in the active site.

This sequence belongs to the peptidase S15 family. Homodimer.

It localises to the cytoplasm. The catalysed reaction is Hydrolyzes Xaa-Pro-|- bonds to release unblocked, N-terminal dipeptides from substrates including Ala-Pro-|-p-nitroanilide and (sequentially) Tyr-Pro-|-Phe-Pro-|-Gly-Pro-|-Ile.. In terms of biological role, removes N-terminal dipeptides sequentially from polypeptides having unsubstituted N-termini provided that the penultimate residue is proline. This chain is Xaa-Pro dipeptidyl-peptidase, found in Streptococcus agalactiae serotype Ia (strain ATCC 27591 / A909 / CDC SS700).